The primary structure comprises 503 residues: Type II secretion system ATPase E (503 aa).

Residues cysteine 397, cysteine 400, cysteine 430, and cysteine 433 each contribute to the Zn(2+) site.

Belongs to the GSP E family. As to quaternary structure, forms homooligomers; most probably hexamers. Interacts with EpsL/GspL. Requires Zn(2+) as cofactor.

The protein localises to the cell inner membrane. The enzyme catalyses ATP + H2O + cellular proteinSide 1 = ADP + phosphate + cellular proteinSide 2.. In terms of biological role, ATPase component of the type II secretion system required for the energy-dependent secretion of extracellular factors such as proteases and toxins from the periplasm. Acts as a molecular motor to provide the energy that is required for assembly of the pseudopilus and the extrusion of substrates generated in the cytoplasm. This chain is Type II secretion system ATPase E (epsE), found in Vibrio cholerae serotype O1 (strain ATCC 39315 / El Tor Inaba N16961).